A 115-amino-acid polypeptide reads, in one-letter code: C-type natriuretic peptide prohormone (115 aa).

A disordered region spans residues 24 to 49 (PSDELNNEAEEMSPAASLPELNADQS). A disulfide bridge links Cys99 with Cys115.

Belongs to the natriuretic peptide family. CNP-115 is differentially processed to produce CNP-38 and CNP-39 in the heart and CNP-22 in the brain.

The protein localises to the secreted. In terms of biological role, hormone which may be vasoactive and natriuretic. Has a cGMP-stimulating activity. In Scyliorhinus canicula (Small-spotted catshark), this protein is C-type natriuretic peptide prohormone.